Here is a 442-residue protein sequence, read N- to C-terminus: Proline--tRNA ligase (442 aa).

It belongs to the class-II aminoacyl-tRNA synthetase family. ProS type 2 subfamily. In terms of assembly, homodimer.

It localises to the cytoplasm. The enzyme catalyses tRNA(Pro) + L-proline + ATP = L-prolyl-tRNA(Pro) + AMP + diphosphate. Catalyzes the attachment of proline to tRNA(Pro) in a two-step reaction: proline is first activated by ATP to form Pro-AMP and then transferred to the acceptor end of tRNA(Pro). The protein is Proline--tRNA ligase of Brucella anthropi (strain ATCC 49188 / DSM 6882 / CCUG 24695 / JCM 21032 / LMG 3331 / NBRC 15819 / NCTC 12168 / Alc 37) (Ochrobactrum anthropi).